The following is a 469-amino-acid chain: Uronate isomerase (469 aa).

The protein belongs to the metallo-dependent hydrolases superfamily. Uronate isomerase family.

The catalysed reaction is D-glucuronate = D-fructuronate. It carries out the reaction aldehydo-D-galacturonate = keto-D-tagaturonate. The protein operates within carbohydrate metabolism; pentose and glucuronate interconversion. The chain is Uronate isomerase from Pectobacterium carotovorum subsp. carotovorum (strain PC1).